Here is a 358-residue protein sequence, read N- to C-terminus: Insulin gene enhancer protein isl-2b (358 aa).

2 consecutive LIM zinc-binding domains span residues 27–80 (CVGC…CKRD) and 89–143 (CAKC…RADH). The homeobox DNA-binding region spans 191-250 (TTRVRTVLNEKQLHTLRTCYNANPRPDALMKEQLVEMTGLSPRVIRVWFQNKRCKDKKRS). Over residues 325–335 (ESGSLGNSSGS) the composition is skewed to low complexity. The segment at 325–358 (ESGSLGNSSGSDVTSLSSQLPDTPNSMVPSPVET) is disordered. Polar residues predominate over residues 336 to 358 (DVTSLSSQLPDTPNSMVPSPVET).

It is found in the nucleus. Binds to one of the cis-acting domain of the insulin gene enhancer. May be involved in the regional specification of the myotome and also in target recognition by the caudal primary neuron. This chain is Insulin gene enhancer protein isl-2b (isl2b), found in Danio rerio (Zebrafish).